A 350-amino-acid polypeptide reads, in one-letter code: Adenine DNA glycosylase (350 aa).

The active-site Proton donor/acceptor is the glutamate 37. [4Fe-4S] cluster is bound by residues cysteine 192, cysteine 199, cysteine 202, and cysteine 208.

Belongs to the Nth/MutY family. Monomer. It depends on [4Fe-4S] cluster as a cofactor.

It carries out the reaction Hydrolyzes free adenine bases from 7,8-dihydro-8-oxoguanine:adenine mismatched double-stranded DNA, leaving an apurinic site.. In terms of biological role, adenine glycosylase active on G-A mispairs. MutY also corrects error-prone DNA synthesis past GO lesions which are due to the oxidatively damaged form of guanine: 7,8-dihydro-8-oxoguanine (8-oxo-dGTP). This Escherichia coli (strain K12) protein is Adenine DNA glycosylase (mutY).